Here is a 204-residue protein sequence, read N- to C-terminus: Probable chorismate pyruvate-lyase (204 aa).

Residues arginine 78, leucine 131, and glutamate 190 each coordinate substrate.

This sequence belongs to the UbiC family.

It localises to the cytoplasm. It carries out the reaction chorismate = 4-hydroxybenzoate + pyruvate. The protein operates within cofactor biosynthesis; ubiquinone biosynthesis. Removes the pyruvyl group from chorismate, with concomitant aromatization of the ring, to provide 4-hydroxybenzoate (4HB) for the ubiquinone pathway. This is Probable chorismate pyruvate-lyase from Shewanella frigidimarina (strain NCIMB 400).